The following is a 161-amino-acid chain: Large ribosomal subunit protein uL11 (161 aa).

The protein belongs to the universal ribosomal protein uL11 family. Part of the ribosomal stalk of the 50S ribosomal subunit. Interacts with L10 and the large rRNA to form the base of the stalk. L10 forms an elongated spine to which L12 dimers bind in a sequential fashion forming a multimeric L10(L12)X complex.

Its function is as follows. Forms part of the ribosomal stalk which helps the ribosome interact with GTP-bound translation factors. This Methanosarcina mazei (strain ATCC BAA-159 / DSM 3647 / Goe1 / Go1 / JCM 11833 / OCM 88) (Methanosarcina frisia) protein is Large ribosomal subunit protein uL11.